The sequence spans 593 residues: Mitoguardin 2 (593 aa).

2 helical membrane passes run methionine 11–glycine 31 and proline 42–alanine 62. Disordered stretches follow at residues proline 98–serine 134, threonine 150–glycine 171, and valine 197–glutamine 229. Composition is skewed to low complexity over residues serine 106 to serine 116 and serine 124 to serine 134. At serine 132 the chain carries Phosphoserine. Over residues serine 205 to threonine 218 the composition is skewed to polar residues. Threonine 206 carries the post-translational modification Phosphothreonine. A phosphoserine mark is found at serine 220, serine 224, and serine 228. Threonine 273 bears the Phosphothreonine mark. Phosphoserine is present on residues serine 276 and serine 295. The FFAT motif lies at serine 292 to glutamate 298.

Belongs to the mitoguardin family. As to quaternary structure, homodimer and heterodimer; forms heterodimers with MIGA1. Interacts with PLD6/MitoPLD. Interacts (via phosphorylated FFAT motif) with MOSPD2. Phosphorylation at Ser-295 of the FFAT motif activates interaction with MOSPD2.

The protein resides in the mitochondrion outer membrane. Functionally, regulator of mitochondrial fusion. Acts by forming homo- and heterodimers at the mitochondrial outer membrane and facilitating the formation of PLD6/MitoPLD dimers. May act by regulating phospholipid metabolism via PLD6/MitoPLD. The chain is Mitoguardin 2 from Mus musculus (Mouse).